Here is a 192-residue protein sequence, read N- to C-terminus: Density-regulated protein homolog (192 aa).

Residues 62-116 are disordered; sequence GLEISDEPAADGDEKKKQKRGGKGSKTGAAAAQAAASGGKKKGGGPQKVTLQREP. The span at 87-99 shows a compositional bias: low complexity; it reads KTGAAAAQAAASG. The region spanning 117 to 176 is the SUI1 domain; the sequence is RGKKSVTVIKGLATFDIDLKVASKLFAQKFACGSSVTGADEIVIQGDVKDDLLDLIPEKW.

Belongs to the DENR family.

This Caenorhabditis elegans protein is Density-regulated protein homolog.